A 35-amino-acid chain; its full sequence is UPF0387 membrane protein YohO (35 aa).

Residues 6–26 (IGVIALFLLMAIGGIGGVMLA) form a helical membrane-spanning segment.

Belongs to the UPF0387 family.

The protein localises to the cell inner membrane. In Salmonella paratyphi A (strain ATCC 9150 / SARB42), this protein is UPF0387 membrane protein YohO.